Here is a 220-residue protein sequence, read N- to C-terminus: 7-cyano-7-deazaguanine synthase (220 aa).

An ATP-binding site is contributed by 11-21; the sequence is VSGGMDSVTLM. Zn(2+) contacts are provided by Cys-186, Cys-194, Cys-197, and Cys-200.

This sequence belongs to the QueC family. The cofactor is Zn(2+).

The catalysed reaction is 7-carboxy-7-deazaguanine + NH4(+) + ATP = 7-cyano-7-deazaguanine + ADP + phosphate + H2O + H(+). It functions in the pathway purine metabolism; 7-cyano-7-deazaguanine biosynthesis. Its function is as follows. Catalyzes the ATP-dependent conversion of 7-carboxy-7-deazaguanine (CDG) to 7-cyano-7-deazaguanine (preQ(0)). This Porphyromonas gingivalis (strain ATCC BAA-308 / W83) protein is 7-cyano-7-deazaguanine synthase.